The chain runs to 153 residues: Probable succinate transporter subunit YjjB (153 aa).

4 helical membrane-spanning segments follow: residues tryptophan 7–phenylalanine 27, methionine 51–isoleucine 71, valine 83–isoleucine 103, and phenylalanine 125–tryptophan 145.

This sequence belongs to the ThrE exporter (TC 2.A.79) family. The transporter is composed of YjjB and YjjP.

It is found in the cell inner membrane. Involved in succinate export with YjjP. Both proteins are required for export. This is Probable succinate transporter subunit YjjB from Yersinia pestis bv. Antiqua (strain Antiqua).